We begin with the raw amino-acid sequence, 918 residues long: Signal transduction histidine-protein kinase BarA (918 aa).

At methionine 1 to arginine 9 the chain is on the cytoplasmic side. The chain crosses the membrane as a helical span at residues methionine 10–valine 31. Residues histidine 32–glutamate 176 lie on the Periplasmic side of the membrane. The chain crosses the membrane as a helical span at residues isoleucine 177–tryptophan 196. At arginine 197–glycine 918 the chain is on the cytoplasmic side. Residues arginine 200–glutamate 252 form the HAMP domain. Residues asparagine 299–leucine 520 form the Histidine kinase domain. Residue histidine 302 is modified to Phosphohistidine; by autocatalysis. The Response regulatory domain occupies threonine 669–lysine 785. Position 718 is a 4-aspartylphosphate (aspartate 718). In terms of domain architecture, HPt spans lysine 822 to glycine 918. Phosphohistidine is present on histidine 861.

In terms of processing, activation requires a sequential transfer of a phosphate group from a His in the primary transmitter domain, to an Asp in the receiver domain and to a His in the secondary transmitter domain.

It localises to the cell inner membrane. It carries out the reaction ATP + protein L-histidine = ADP + protein N-phospho-L-histidine.. Functionally, member of the two-component regulatory system UvrY/BarA involved in the regulation of carbon metabolism via the CsrA/CsrB regulatory system. Phosphorylates UvrY, probably via a four-step phosphorelay. The chain is Signal transduction histidine-protein kinase BarA (barA) from Escherichia coli O157:H7.